The sequence spans 541 residues: Phosphoenolpyruvate carboxykinase (ATP) (541 aa).

243-250 contacts ATP; that stretch reads GLSGTGKT.

It belongs to the phosphoenolpyruvate carboxykinase (ATP) family.

It catalyses the reaction oxaloacetate + ATP = phosphoenolpyruvate + ADP + CO2. The protein operates within carbohydrate biosynthesis; gluconeogenesis. The sequence is that of Phosphoenolpyruvate carboxykinase (ATP) (PCK1) from Eremothecium gossypii (strain ATCC 10895 / CBS 109.51 / FGSC 9923 / NRRL Y-1056) (Yeast).